Reading from the N-terminus, the 101-residue chain is Putative antitoxin HigA2 (101 aa).

The region spanning 35–90 (LRELRAAQSLTQVQVAALAHIRQSRVSSIENGDIGSAQVNTLRKYVSALGGELDIT) is the HTH cro/C1-type domain. The H-T-H motif DNA-binding region spans 46–65 (QVQVAALAHIRQSRVSSIEN).

Its function is as follows. Putative antitoxin component of a type II toxin-antitoxin (TA) system. Its cognate toxin would be HigB2. The sequence is that of Putative antitoxin HigA2 from Mycobacterium tuberculosis (strain ATCC 25618 / H37Rv).